Consider the following 88-residue polypeptide: Phosphocarrier protein HPr (88 aa).

Positions 1–88 constitute an HPr domain; that stretch reads MKKFQAVIKD…KACLEKNKVI (88 aa). Residue His15 is the Pros-phosphohistidine intermediate of the active site. Ser47 carries the phosphoserine; by HPrK/P modification.

The protein belongs to the HPr family.

The protein resides in the cytoplasm. Its activity is regulated as follows. Phosphorylation on Ser-47 inhibits the phosphoryl transfer from enzyme I to HPr. Its function is as follows. General (non sugar-specific) component of the phosphoenolpyruvate-dependent sugar phosphotransferase system (sugar PTS). This major carbohydrate active-transport system catalyzes the phosphorylation of incoming sugar substrates concomitantly with their translocation across the cell membrane. The phosphoryl group from phosphoenolpyruvate (PEP) is transferred to the phosphoryl carrier protein HPr by enzyme I. Phospho-HPr then transfers it to the PTS EIIA domain. P-Ser-HPr interacts with the catabolite control protein A (CcpA), forming a complex that binds to DNA at the catabolite response elements cre, operator sites preceding a large number of catabolite-regulated genes. Thus, P-Ser-HPr is a corepressor in carbon catabolite repression (CCR), a mechanism that allows bacteria to coordinate and optimize the utilization of available carbon sources. P-Ser-HPr also plays a role in inducer exclusion, in which it probably interacts with several non-PTS permeases and inhibits their transport activity. The protein is Phosphocarrier protein HPr (ptsH) of Mycoplasma genitalium (strain ATCC 33530 / DSM 19775 / NCTC 10195 / G37) (Mycoplasmoides genitalium).